A 153-amino-acid chain; its full sequence is Large ribosomal subunit protein bL9 (153 aa).

Belongs to the bacterial ribosomal protein bL9 family.

Binds to the 23S rRNA. The sequence is that of Large ribosomal subunit protein bL9 from Gloeobacter violaceus (strain ATCC 29082 / PCC 7421).